We begin with the raw amino-acid sequence, 238 residues long: MNPEQFQTALAEKGIELSDTQLKQFHDYFEMLVEWNEKMNLTAITDEKEVYLKHFYDSISAAFYVDFTKFDTICDVGAGAGFPSLPIKICFPHLKVSIVDSLKKRMTFLDALAEKLGLTDVHFYHDRAETFGQNKAHREKYDLVTARAVARMSVLSELCMPLVKKGGSFLVMKAAQAEQELQTAEKAIKLFGGKVEEHFAFSLPVEESERNIYVITKTKETPNKYPRKPGTPNKLPIE.

Residues Gly77, Phe82, 128–129, and Arg147 contribute to the S-adenosyl-L-methionine site; that span reads AE.

It belongs to the methyltransferase superfamily. RNA methyltransferase RsmG family.

The protein localises to the cytoplasm. Functionally, specifically methylates the N7 position of guanine in position 535 of 16S rRNA. The protein is Ribosomal RNA small subunit methyltransferase G of Listeria monocytogenes serotype 4b (strain CLIP80459).